A 570-amino-acid polypeptide reads, in one-letter code: Periplasmic trehalase (570 aa).

The N-terminal stretch at 1-34 (MIPPEIRRSVLLQKAIKLALAGTLLTFASFSATA) is a signal peptide. Substrate is bound by residues R159, 166 to 167 (WD), N203, 212 to 214 (RSQ), 284 to 286 (RPE), and G317. Residues D319 and E503 each act as proton donor/acceptor in the active site. E518 serves as a coordination point for substrate. Positions 544–570 (KPCDSVPSTRPASLSATPTKTPSAATQ) are disordered. Residues 554-570 (PASLSATPTKTPSAATQ) show a composition bias toward low complexity.

It belongs to the glycosyl hydrolase 37 family. In terms of assembly, monomer.

It is found in the periplasm. It catalyses the reaction alpha,alpha-trehalose + H2O = alpha-D-glucose + beta-D-glucose. Provides the cells with the ability to utilize trehalose at high osmolarity by splitting it into glucose molecules that can subsequently be taken up by the phosphotransferase-mediated uptake system. This chain is Periplasmic trehalase, found in Salmonella schwarzengrund (strain CVM19633).